The sequence spans 283 residues: NFU1 iron-sulfur cluster scaffold homolog, mitochondrial (283 aa).

Residues 1–30 (MSKFLSQAALNTLRNTRLGSRQLVRSFAGI) constitute a mitochondrion transit peptide. The segment at 182–250 (IKELLDTRIR…IPEVESVEQV (69 aa)) is nifU. Residues cysteine 219 and cysteine 222 each coordinate [4Fe-4S] cluster.

It belongs to the NifU family.

It localises to the mitochondrion. In terms of biological role, molecular scaffold for [Fe-S] cluster assembly of mitochondrial iron-sulfur proteins. This is NFU1 iron-sulfur cluster scaffold homolog, mitochondrial from Drosophila yakuba (Fruit fly).